A 245-amino-acid polypeptide reads, in one-letter code: UPF0246 protein LBUL_1917 (245 aa).

Belongs to the UPF0246 family.

This Lactobacillus delbrueckii subsp. bulgaricus (strain ATCC BAA-365 / Lb-18) protein is UPF0246 protein LBUL_1917.